A 536-amino-acid polypeptide reads, in one-letter code: Cytochrome P450 monooxygenase macC (536 aa).

Residues 2–22 (ALLYITTAALALLLLFLRAVF) form a helical membrane-spanning segment. C448 is a heme binding site.

It belongs to the cytochrome P450 family. It depends on heme as a cofactor.

It is found in the membrane. It participates in secondary metabolite biosynthesis; terpenoid biosynthesis. In terms of biological role, cytochrome P450 monooxygenase; part of the gene cluster that mediates the biosynthesis of macrophorins, isoprenoid epoxycyclohexenones containing cyclized drimane moieties. The first step of the pathway is the synthesis of 6-methylsalicylic acid (6-MSA) by the polyketide synthase macA. 6-MSA is then converted to m-cresol by the decarboxylase macB. The cytochrome P450 monooxygenase macC then catalyzes the oxidation of m-cresol to toluquinol. Epoxidation of toluquinol is then performed by the short chain dehydrogenase macD, with the help of macE, and a further prenylation by macG leads to 7-deacetoxyyanuthone A. The next step is the hydroxylation of C-22 of 7-deacetoxyyanuthone A by the cytochrome P450 monooxygenase macH to yield 22-deacetylyanuthone A. O-Mevalon transferase macI then attaches mevalon to the hydroxyl group of 22-deacetylyanuthone A to produce yanuthone E. The terpene cyclase macJ catalyzes the cyclization of 22-deacetylyanuthone A to macrophorin A. MacJ is also able to catalyze cyclization of yanuthone E and 7-deacetoxyyanuthone A to their corresponding macrophorins. The macJ products can be further modified by macH and macJ, as well as by the FAD-dependent monooxygenase macF, to produce additional macrophorins, including 4'-oxomacrophorin A, 4'-oxomacrophorin D and 4'-oxomacrophorin E. This Penicillium terrestre protein is Cytochrome P450 monooxygenase macC.